A 141-amino-acid polypeptide reads, in one-letter code: Hemoglobin subunit alpha-D (141 aa).

The region spanning methionine 1–arginine 141 is the Globin domain. Heme b contacts are provided by histidine 58 and histidine 87.

The protein belongs to the globin family. As to quaternary structure, heterotetramer of two alpha-D chains and two beta chains. Red blood cells.

Involved in oxygen transport from the lung to the various peripheral tissues. The sequence is that of Hemoglobin subunit alpha-D (HBAD) from Phalacrocorax carbo (Great cormorant).